We begin with the raw amino-acid sequence, 73 residues long: UPF0235 protein LBL_1291 (73 aa).

It belongs to the UPF0235 family.

The polypeptide is UPF0235 protein LBL_1291 (Leptospira borgpetersenii serovar Hardjo-bovis (strain L550)).